A 433-amino-acid chain; its full sequence is MINLFRGLLVVLCFASAMVSAEEKNILVTSGSDRAAPIAVVPFGWQGGSVLPEDMAEIISNDLRNSGYYAPIPKQNMISLPTQASEVIFRDWKALGAQYVMVGNITPAGGRLQIQYALFNVATEQQVLTGNVSGTNDQLRDMAHYIADQSFEKLTGIKGAFSTRMLYVTAERFSENNTRYTLQRSDYDGARAVTLLQSREPILSPRFAPDGKRIAYVSFEQKRPRIFVQHIDTGRREQITNFEGLNGAPAWSPDGSKLAFVLSKDGNPEIYVINLASRQLSRVTNDSSIDTEPFFGKDGSTLYFTSDRGGKPQIYKTNINGGGAERVTFVGNYNANPKLSADEKTLVMIHRQDGFTNFKVAVQDLARGSVKILTDSNLDESPTVAPNGTMVIYATRQQGRGVLMLVSINGRVRLPLPTAQGEVREPSWSPYLN.

Positions 1–21 are cleaved as a signal peptide; the sequence is MINLFRGLLVVLCFASAMVSA.

Belongs to the TolB family. As to quaternary structure, the Tol-Pal system is composed of five core proteins: the inner membrane proteins TolA, TolQ and TolR, the periplasmic protein TolB and the outer membrane protein Pal. They form a network linking the inner and outer membranes and the peptidoglycan layer.

The protein resides in the periplasm. Part of the Tol-Pal system, which plays a role in outer membrane invagination during cell division and is important for maintaining outer membrane integrity. The chain is Tol-Pal system protein TolB from Pseudomonas syringae pv. syringae (strain B728a).